The following is a 161-amino-acid chain: Myosin regulatory light chain A, smooth adductor muscle (161 aa).

A1 bears the Blocked amino end (Ala) mark. 2 consecutive EF-hand domains span residues 20 to 55 and 89 to 124; these read KLMQ…LGRT and DTEE…MGDN. The Ca(2+) site is built by D33, N35, D37, and D44.

In molluscan muscle, calcium regulation is associated with myosin rather than with actin. Muscle myosin contains two types of light chains: the catalytic light chain, essential for ATPase activity, and the regulatory light chain, a calcium-binding protein responsible for Ca(2+) dependent binding and Ca(2+) dependent Mg-ATPase activity. The protein is Myosin regulatory light chain A, smooth adductor muscle of Mizuhopecten yessoensis (Japanese scallop).